The following is a 1084-amino-acid chain: Autophagy-related protein 11 (1084 aa).

Coiled-coil stretches lie at residues 585 to 739 (VQNL…LTES) and 847 to 879 (VIRRFNDIESLAKKLRKENKNKKILLQKYTNDK). 2 disordered regions span residues 925 to 961 (SMIPPRVIPNRVEPASNTNNSNPSSVPEDMGSPNMNR) and 973 to 1007 (NIGSNNSNNNYVNTGNANGNNKPETNIDTTSSTNA). 2 stretches are compositionally biased toward low complexity: residues 940–949 (SNTNNSNPSS) and 973–993 (NIGSNNSNNNYVNTGNANGNN). The span at 994–1007 (KPETNIDTTSSTNA) shows a compositional bias: polar residues.

This sequence belongs to the ATG11 family. As to quaternary structure, homodimer and potential homooligomers. Interacts with ATG1 kinase and the ATG19 and ATG34 cargo protein transporters. Interacts with ATG9, ATG17 and ATG20.

It localises to the preautophagosomal structure membrane. Its subcellular location is the vacuole membrane. Functionally, involved in cytoplasm to vacuole transport (Cvt), pexophagy, mitophagy and nucleophagy. Recruits mitochondria for their selective degradation via autophagy (mitophagy) during starvation, through its interaction with ATG32. Works as scaffold proteins that recruit ATG proteins to the pre-autophagosome (PAS), the site of vesicle/autophagosome formation. Required for ATG9 anterograde transport from the mitochondria to the PAS. Also recruits the ATG19-prAPE1 complex to the PAS. Required for the Cvt vesicles completion. The polypeptide is Autophagy-related protein 11 (Kluyveromyces marxianus (strain DMKU3-1042 / BCC 29191 / NBRC 104275) (Yeast)).